We begin with the raw amino-acid sequence, 236 residues long: 2-C-methyl-D-erythritol 4-phosphate cytidylyltransferase (236 aa).

Belongs to the IspD/TarI cytidylyltransferase family. IspD subfamily.

It carries out the reaction 2-C-methyl-D-erythritol 4-phosphate + CTP + H(+) = 4-CDP-2-C-methyl-D-erythritol + diphosphate. It functions in the pathway isoprenoid biosynthesis; isopentenyl diphosphate biosynthesis via DXP pathway; isopentenyl diphosphate from 1-deoxy-D-xylulose 5-phosphate: step 2/6. Catalyzes the formation of 4-diphosphocytidyl-2-C-methyl-D-erythritol from CTP and 2-C-methyl-D-erythritol 4-phosphate (MEP). The polypeptide is 2-C-methyl-D-erythritol 4-phosphate cytidylyltransferase (Burkholderia multivorans (strain ATCC 17616 / 249)).